The sequence spans 352 residues: Photosystem II protein D1 (352 aa).

Residue Thr2 is modified to N-acetylthreonine. The residue at position 2 (Thr2) is a Phosphothreonine. Helical transmembrane passes span Tyr29 to Ser46, His118 to Leu133, and Trp142 to Ala156. His118 contacts chlorophyll a. Tyr126 lines the pheophytin a pocket. Residues Asp170 and Glu189 each coordinate [CaMn4O5] cluster. A helical transmembrane segment spans residues Phe197–Leu218. His198 is a binding site for chlorophyll a. A quinone contacts are provided by residues His215 and Ser264–Phe265. His215 provides a ligand contact to Fe cation. A Fe cation-binding site is contributed by His272. Residues Phe274–Leu288 form a helical membrane-spanning segment. Positions 332, 333, 342, and 344 each coordinate [CaMn4O5] cluster. A propeptide spanning residues Ser345–Ala352 is cleaved from the precursor.

The protein belongs to the reaction center PufL/M/PsbA/D family. As to quaternary structure, PSII is composed of 1 copy each of membrane proteins PsbA, PsbB, PsbC, PsbD, PsbE, PsbF, PsbH, PsbI, PsbJ, PsbK, PsbL, PsbM, PsbT, PsbX, PsbY, PsbZ, Psb30/Ycf12, at least 3 peripheral proteins of the oxygen-evolving complex and a large number of cofactors. It forms dimeric complexes. The D1/D2 heterodimer binds P680, chlorophylls that are the primary electron donor of PSII, and subsequent electron acceptors. It shares a non-heme iron and each subunit binds pheophytin, quinone, additional chlorophylls, carotenoids and lipids. D1 provides most of the ligands for the Mn4-Ca-O5 cluster of the oxygen-evolving complex (OEC). There is also a Cl(-1) ion associated with D1 and D2, which is required for oxygen evolution. The PSII complex binds additional chlorophylls, carotenoids and specific lipids. serves as cofactor. Tyr-161 forms a radical intermediate that is referred to as redox-active TyrZ, YZ or Y-Z. In terms of processing, C-terminally processed by CTPA; processing is essential to allow assembly of the oxygen-evolving complex and thus photosynthetic growth.

The protein localises to the plastid. The protein resides in the chloroplast thylakoid membrane. The enzyme catalyses 2 a plastoquinone + 4 hnu + 2 H2O = 2 a plastoquinol + O2. Photosystem II (PSII) is a light-driven water:plastoquinone oxidoreductase that uses light energy to abstract electrons from H(2)O, generating O(2) and a proton gradient subsequently used for ATP formation. It consists of a core antenna complex that captures photons, and an electron transfer chain that converts photonic excitation into a charge separation. The D1/D2 (PsbA/PsbD) reaction center heterodimer binds P680, the primary electron donor of PSII as well as several subsequent electron acceptors. This Chlorella ellipsoidea protein is Photosystem II protein D1.